We begin with the raw amino-acid sequence, 270 residues long: Dehydrodolichyl diphosphate synthase (270 aa).

It belongs to the UPP synthase family.

The protein localises to the endoplasmic reticulum membrane. It functions in the pathway protein modification; protein glycosylation. Its function is as follows. Cis-prenyl transferase that adds multiple copies of isopentenyl pyrophosphate (IPP) to farnesyl pyrophosphate (FPP) to produce dehydrodolichyl diphosphate (Dedol-PP). The chain is Dehydrodolichyl diphosphate synthase (RER2) from Encephalitozoon cuniculi (strain GB-M1) (Microsporidian parasite).